We begin with the raw amino-acid sequence, 499 residues long: 2-isopropylmalate synthase (499 aa).

A Pyruvate carboxyltransferase domain is found at I5–A267. D14, H202, H204, and N238 together coordinate Mn(2+). The interval S391 to R499 is regulatory domain.

This sequence belongs to the alpha-IPM synthase/homocitrate synthase family. LeuA type 1 subfamily. Mn(2+) serves as cofactor.

Its subcellular location is the cytoplasm. The enzyme catalyses 3-methyl-2-oxobutanoate + acetyl-CoA + H2O = (2S)-2-isopropylmalate + CoA + H(+). It functions in the pathway amino-acid biosynthesis; L-leucine biosynthesis; L-leucine from 3-methyl-2-oxobutanoate: step 1/4. Functionally, catalyzes the condensation of the acetyl group of acetyl-CoA with 3-methyl-2-oxobutanoate (2-ketoisovalerate) to form 3-carboxy-3-hydroxy-4-methylpentanoate (2-isopropylmalate). This Pyrococcus furiosus (strain ATCC 43587 / DSM 3638 / JCM 8422 / Vc1) protein is 2-isopropylmalate synthase.